Consider the following 196-residue polypeptide: MSRYRGPRLKKIRRLGALPGLTRKTPKSGSNLKKKFHSGKKEQYRIRLQEKQKLRFHYGLTERQLLRYVHIAGKAKKSTGQVLLQLLEMRLDNIVFRLGMASTIPGARQLVNHRHILVNGRIVDIPSFRCKPRDIITTKDNQRSKRLVQNSIASSDPGKLPKHLTVDTLQYKGLVQKILDRKWVGLKINELLVVEY.

The segment at 17 to 36 (ALPGLTRKTPKSGSNLKKKF) is disordered. Residues 89–150 (MRLDNIVFRL…NQRSKRLVQN (62 aa)) form the S4 RNA-binding domain.

This sequence belongs to the universal ribosomal protein uS4 family. Part of the 30S ribosomal subunit. Contacts protein S5. The interaction surface between S4 and S5 is involved in control of translational fidelity.

It localises to the plastid. The protein localises to the chloroplast. In terms of biological role, one of the primary rRNA binding proteins, it binds directly to 16S rRNA where it nucleates assembly of the body of the 30S subunit. With S5 and S12 plays an important role in translational accuracy. This Tragus racemosus (Carrot grass) protein is Small ribosomal subunit protein uS4c (rps4).